Consider the following 115-residue polypeptide: Probable prefoldin subunit 1 (115 aa).

The protein belongs to the prefoldin subunit beta family. As to quaternary structure, heterohexamer of two PFD-alpha type and four PFD-beta type subunits.

Binds specifically to cytosolic chaperonin (c-CPN) and transfers target proteins to it. Binds to nascent polypeptide chain and promotes folding in an environment in which there are many competing pathways for nonnative proteins. This Dictyostelium discoideum (Social amoeba) protein is Probable prefoldin subunit 1 (pfdn1).